A 297-amino-acid polypeptide reads, in one-letter code: Protoheme IX farnesyltransferase 1 (297 aa).

9 consecutive transmembrane segments (helical) span residues 23–43, 45–65, 93–113, 117–137, 145–165, 171–191, 216–236, 241–261, and 277–297; these read VVVL…RAGV, WSVL…AAVV, LPAL…LLAF, LTAW…TGFL, IVIG…AVSG, PLLL…ALAI, LHIL…YAIH, LYLA…WVLY, and IAYL…LLNL.

This sequence belongs to the UbiA prenyltransferase family. Protoheme IX farnesyltransferase subfamily.

It is found in the cell inner membrane. The enzyme catalyses heme b + (2E,6E)-farnesyl diphosphate + H2O = Fe(II)-heme o + diphosphate. It functions in the pathway porphyrin-containing compound metabolism; heme O biosynthesis; heme O from protoheme: step 1/1. In terms of biological role, converts heme B (protoheme IX) to heme O by substitution of the vinyl group on carbon 2 of heme B porphyrin ring with a hydroxyethyl farnesyl side group. This is Protoheme IX farnesyltransferase 1 from Pseudomonas putida (strain GB-1).